The following is a 70-amino-acid chain: Conotoxin Lt3.4 (70 aa).

The first 24 residues, methionine 1–alanine 24, serve as a signal peptide directing secretion. A propeptide spanning residues aspartate 25–arginine 54 is cleaved from the precursor. Glutamine 55 is modified (pyrrolidone carboxylic acid). 3 cysteine pairs are disulfide-bonded: cysteine 56-cysteine 68, cysteine 57-cysteine 66, and cysteine 62-cysteine 69.

Belongs to the conotoxin M superfamily. Expressed by the venom duct.

It is found in the secreted. In Conus litteratus (Lettered cone), this protein is Conotoxin Lt3.4.